A 494-amino-acid chain; its full sequence is 3-octaprenyl-4-hydroxybenzoate carboxy-lyase (494 aa).

N172 provides a ligand contact to Mn(2+). Residues 175-177, 189-191, and 194-195 contribute to the prenylated FMN site; these read IYR, RWL, and RG. Residue E238 participates in Mn(2+) binding. The active-site Proton donor is the D294.

Belongs to the UbiD family. As to quaternary structure, homohexamer. The cofactor is prenylated FMN. Mn(2+) is required as a cofactor.

The protein localises to the cell membrane. The enzyme catalyses a 4-hydroxy-3-(all-trans-polyprenyl)benzoate + H(+) = a 2-(all-trans-polyprenyl)phenol + CO2. The protein operates within cofactor biosynthesis; ubiquinone biosynthesis. Catalyzes the decarboxylation of 3-octaprenyl-4-hydroxy benzoate to 2-octaprenylphenol, an intermediate step in ubiquinone biosynthesis. The polypeptide is 3-octaprenyl-4-hydroxybenzoate carboxy-lyase (Albidiferax ferrireducens (strain ATCC BAA-621 / DSM 15236 / T118) (Rhodoferax ferrireducens)).